Here is a 499-residue protein sequence, read N- to C-terminus: UPF0159 protein Ta1429 (499 aa).

2 consecutive ThyX domains span residues 1–246 (MIDR…ALSQ) and 271–476 (EKVR…IKFV).

It belongs to the UPF0159 family.

This chain is UPF0159 protein Ta1429, found in Thermoplasma acidophilum (strain ATCC 25905 / DSM 1728 / JCM 9062 / NBRC 15155 / AMRC-C165).